A 412-amino-acid polypeptide reads, in one-letter code: Argininosuccinate synthase (412 aa).

Residues 16-24 (AYSGGLDTS) and alanine 44 each bind ATP. The L-citrulline site is built by tyrosine 96 and serine 101. Glycine 126 contacts ATP. Threonine 128, asparagine 132, and aspartate 133 together coordinate L-aspartate. Asparagine 132 provides a ligand contact to L-citrulline. L-citrulline contacts are provided by arginine 136, serine 185, serine 194, glutamate 270, and tyrosine 282.

The protein belongs to the argininosuccinate synthase family. Type 1 subfamily. Homotetramer.

Its subcellular location is the cytoplasm. It catalyses the reaction L-citrulline + L-aspartate + ATP = 2-(N(omega)-L-arginino)succinate + AMP + diphosphate + H(+). It functions in the pathway amino-acid biosynthesis; L-arginine biosynthesis; L-arginine from L-ornithine and carbamoyl phosphate: step 2/3. The polypeptide is Argininosuccinate synthase (Shewanella baltica (strain OS195)).